Consider the following 405-residue polypeptide: Dynactin subunit 2 (405 aa).

Positions 1–24 are disordered; sequence MADPKYADLPGIARNEPDVYETSD. Residues 101-134 adopt a coiled-coil conformation; that stretch reads PQQKYQRLLHEIQELTQEVEKAQSTVKESAAEEK. The disordered stretch occupies residues 186-207; sequence AKTRKNPEGKSPAKGPGPDNEN. A coiled-coil region spans residues 383–403; it reads KENLATVEDNFTSIDARIKKL.

It belongs to the dynactin subunit 2 family. Subunit of dynactin, a multiprotein complex part of a tripartite complex with dynein and a adapter, such as BICDL1, BICD2 or HOOK3. The dynactin complex is built around ACTR1A/ACTB filament and consists of an actin-related filament composed of a shoulder domain, a pointed end and a barbed end. Its length is defined by its flexible shoulder domain. The soulder is composed of 2 DCTN1 subunits, 4 DCTN2 and 2 DCTN3.

It is found in the cytoplasm. Its subcellular location is the cytoskeleton. It localises to the microtubule organizing center. The protein resides in the centrosome. The protein localises to the membrane. Its function is as follows. Part of the dynactin complex that activates the molecular motor dynein for ultra-processive transport along microtubules. In the dynactin soulder domain, binds the ACTR1A filament and acts as a molecular ruler to determine the length. Modulates cytoplasmic dynein binding to an organelle, and plays a role in prometaphase chromosome alignment and spindle organization during mitosis. Involved in anchoring microtubules to centrosomes. In Xenopus tropicalis (Western clawed frog), this protein is Dynactin subunit 2 (dctn2).